Reading from the N-terminus, the 101-residue chain is Large ribosomal subunit protein uL23 (101 aa).

Belongs to the universal ribosomal protein uL23 family. Part of the 50S ribosomal subunit. Contacts protein L29, and trigger factor when it is bound to the ribosome.

One of the early assembly proteins it binds 23S rRNA. One of the proteins that surrounds the polypeptide exit tunnel on the outside of the ribosome. Forms the main docking site for trigger factor binding to the ribosome. In Corynebacterium kroppenstedtii (strain DSM 44385 / JCM 11950 / CIP 105744 / CCUG 35717), this protein is Large ribosomal subunit protein uL23.